The primary structure comprises 882 residues: Leucine--tRNA ligase (882 aa).

The short motif at 43 to 53 (PYPSGRIHMGH) is the 'HIGH' region element. The 'KMSKS' region signature appears at 634-638 (KMSKS). K637 lines the ATP pocket.

This sequence belongs to the class-I aminoacyl-tRNA synthetase family.

It is found in the cytoplasm. It carries out the reaction tRNA(Leu) + L-leucine + ATP = L-leucyl-tRNA(Leu) + AMP + diphosphate. The sequence is that of Leucine--tRNA ligase from Rhodopseudomonas palustris (strain BisB18).